The following is a 201-amino-acid chain: dITP/XTP pyrophosphatase (201 aa).

9–14 is a binding site for substrate; sequence SNNAGK. Glu-41 and Asp-70 together coordinate Mg(2+). Asp-70 serves as the catalytic Proton acceptor. Substrate-binding positions include Ser-71, 155–158, Lys-178, and 183–184; these read FGYD and HR.

Belongs to the HAM1 NTPase family. In terms of assembly, homodimer. Requires Mg(2+) as cofactor.

It catalyses the reaction XTP + H2O = XMP + diphosphate + H(+). The enzyme catalyses dITP + H2O = dIMP + diphosphate + H(+). It carries out the reaction ITP + H2O = IMP + diphosphate + H(+). Functionally, pyrophosphatase that catalyzes the hydrolysis of nucleoside triphosphates to their monophosphate derivatives, with a high preference for the non-canonical purine nucleotides XTP (xanthosine triphosphate), dITP (deoxyinosine triphosphate) and ITP. Seems to function as a house-cleaning enzyme that removes non-canonical purine nucleotides from the nucleotide pool, thus preventing their incorporation into DNA/RNA and avoiding chromosomal lesions. This chain is dITP/XTP pyrophosphatase, found in Methylococcus capsulatus (strain ATCC 33009 / NCIMB 11132 / Bath).